The chain runs to 115 residues: Large ribosomal subunit protein bL20 (115 aa).

It belongs to the bacterial ribosomal protein bL20 family.

Functionally, binds directly to 23S ribosomal RNA and is necessary for the in vitro assembly process of the 50S ribosomal subunit. It is not involved in the protein synthesizing functions of that subunit. In Prochlorococcus marinus subsp. pastoris (strain CCMP1986 / NIES-2087 / MED4), this protein is Large ribosomal subunit protein bL20.